The following is a 256-amino-acid chain: Imidazole glycerol phosphate synthase subunit HisF (256 aa).

Catalysis depends on residues Asp12 and Asp131.

Belongs to the HisA/HisF family. As to quaternary structure, heterodimer of HisH and HisF.

It is found in the cytoplasm. It carries out the reaction 5-[(5-phospho-1-deoxy-D-ribulos-1-ylimino)methylamino]-1-(5-phospho-beta-D-ribosyl)imidazole-4-carboxamide + L-glutamine = D-erythro-1-(imidazol-4-yl)glycerol 3-phosphate + 5-amino-1-(5-phospho-beta-D-ribosyl)imidazole-4-carboxamide + L-glutamate + H(+). The protein operates within amino-acid biosynthesis; L-histidine biosynthesis; L-histidine from 5-phospho-alpha-D-ribose 1-diphosphate: step 5/9. Its function is as follows. IGPS catalyzes the conversion of PRFAR and glutamine to IGP, AICAR and glutamate. The HisF subunit catalyzes the cyclization activity that produces IGP and AICAR from PRFAR using the ammonia provided by the HisH subunit. The polypeptide is Imidazole glycerol phosphate synthase subunit HisF (Pseudomonas syringae pv. syringae (strain B728a)).